The sequence spans 334 residues: Ferredoxin--NADP reductase (334 aa).

FAD contacts are provided by Asp-33, Gln-41, Tyr-46, Ala-86, Phe-120, Asp-286, and Thr-327.

Belongs to the ferredoxin--NADP reductase type 2 family. As to quaternary structure, homodimer. FAD serves as cofactor.

The enzyme catalyses 2 reduced [2Fe-2S]-[ferredoxin] + NADP(+) + H(+) = 2 oxidized [2Fe-2S]-[ferredoxin] + NADPH. The polypeptide is Ferredoxin--NADP reductase (Rickettsia akari (strain Hartford)).